The sequence spans 280 residues: Shikimate dehydrogenase (NADP(+)) (280 aa).

Shikimate is bound by residues 23–25 and Thr70; that span reads SLS. Residue Lys74 is the Proton acceptor of the active site. Shikimate-binding residues include Asn95 and Asp111. NADP(+) contacts are provided by residues 135 to 139, 158 to 163, and Ile221; these read GSGGA and NRTISK. Tyr223 serves as a coordination point for shikimate. Gly247 provides a ligand contact to NADP(+).

The protein belongs to the shikimate dehydrogenase family. Homodimer.

The catalysed reaction is shikimate + NADP(+) = 3-dehydroshikimate + NADPH + H(+). It functions in the pathway metabolic intermediate biosynthesis; chorismate biosynthesis; chorismate from D-erythrose 4-phosphate and phosphoenolpyruvate: step 4/7. Its function is as follows. Involved in the biosynthesis of the chorismate, which leads to the biosynthesis of aromatic amino acids. Catalyzes the reversible NADPH linked reduction of 3-dehydroshikimate (DHSA) to yield shikimate (SA). The protein is Shikimate dehydrogenase (NADP(+)) of Buchnera aphidicola subsp. Cinara cedri (strain Cc).